Here is a 232-residue protein sequence, read N- to C-terminus: Ion-translocating oxidoreductase complex subunit E (232 aa).

6 helical membrane-spanning segments follow: residues G18 to A38, L39 to V59, I69 to A89, G93 to G113, A128 to V148, and S182 to G202.

Belongs to the NqrDE/RnfAE family. The complex is composed of six subunits: RnfA, RnfB, RnfC, RnfD, RnfE and RnfG.

Its subcellular location is the cell inner membrane. Functionally, part of a membrane-bound complex that couples electron transfer with translocation of ions across the membrane. The polypeptide is Ion-translocating oxidoreductase complex subunit E (Shewanella amazonensis (strain ATCC BAA-1098 / SB2B)).